The following is a 192-amino-acid chain: Ion-translocating oxidoreductase complex subunit A (192 aa).

Helical transmembrane passes span 5 to 25 (LLLL…FLGL), 39 to 59 (IGMS…SYLV), 65 to 85 (LPFD…AVVV), 102 to 122 (ALGI…VALL), 134 to 154 (AIYG…FSAM), and 171 to 191 (AIAM…TGLV).

This sequence belongs to the NqrDE/RnfAE family. In terms of assembly, the complex is composed of six subunits: RnfA, RnfB, RnfC, RnfD, RnfE and RnfG.

It is found in the cell inner membrane. Functionally, part of a membrane-bound complex that couples electron transfer with translocation of ions across the membrane. This is Ion-translocating oxidoreductase complex subunit A from Shewanella baltica (strain OS185).